The primary structure comprises 1512 residues: Sterol 3-beta-glucosyltransferase (1512 aa).

Disordered regions lie at residues 22-50 (FSGSPNVSGDEGTDADNENPEHRTTYHSL) and 150-222 (DEHT…DTDV). Over residues 156–169 (SEEEDSADKEEESI) the composition is skewed to acidic residues. Over residues 190 to 222 (TTATLITTQITRTKTATTATPTPTPTSSVDTDV) the composition is skewed to low complexity. The GRAM 1 domain occupies 296–331 (LQRVFDLSDEDTFCGNYSAWLIKDVLLQGHVYLTKD). The 162-residue stretch at 359–520 (SIVYSGNLGL…WCNNITKLIF (162 aa)) folds into the PH domain. The region spanning 816 to 880 (RNFQSHFSTN…TDIEEVRASR (65 aa)) is the GRAM 2 domain. 12 residues coordinate UDP-alpha-D-glucose: Ser-1024, Arg-1025, Asp-1027, Asn-1299, Ile-1328, His-1330, His-1343, Ser-1346, Gly-1347, Thr-1348, Asp-1367, and Gln-1368. The disordered stretch occupies residues 1450-1512 (YKRHHPVPSG…NNSPSQNSSN (63 aa)). Residues 1467–1493 (TDSDDYDDDEDDDESDKDDEEEEEENS) show a composition bias toward acidic residues. A compositionally biased stretch (polar residues) spans 1501–1512 (GVNNSPSQNSSN).

The protein belongs to the glycosyltransferase 28 family.

It is found in the cytoplasm. The protein resides in the membrane. The enzyme catalyses a sterol + UDP-alpha-D-glucose = a sterol 3-beta-D-glucoside + UDP + H(+). It catalyses the reaction ergosterol + UDP-alpha-D-glucose = ergosteryl 3-beta-D-glucoside + UDP + H(+). Sterol glycosyltransferase responsible for the glycosylation of ergosterol to form ergosterol-glucoside. The sequence is that of Sterol 3-beta-glucosyltransferase from Candida albicans (strain SC5314 / ATCC MYA-2876) (Yeast).